A 368-amino-acid polypeptide reads, in one-letter code: MSETQEFWLISAPNLPGADIFDQVNQKTAKENSLSENKKFNTPALRVGTLNSLITLNDELQKIDTIVESTTKKIARQLVDLVGTKPGKDKSLSINGHTIPQYLQQFAWDDAKYNLKLSLQEIVEKISSAVSKIDDDLKIKSSEYSTLSSSVASEERKASGNLQVRTLNDLITADNIVQTDYFTTAFVVIPKQSEKEFLACYETISDFVLGRSAKRVAQDNDYFLYSVILFKKFYENFKTKIIEKKWVVRDFKLEDNKPTQERSKLTEDKKNCRTSLIRWCRLNFPEAFMAWVHLKVVRVFVESVLRFGIPFNFQAILMKPQKGADKKVRDILFDQFKYLGSAHISGKNETDDSEKFYPYISVSVNWEN.

This sequence belongs to the V-ATPase C subunit family. In terms of assembly, V-ATPase is a heteromultimeric enzyme composed of a peripheral catalytic V1 complex (components A to H) attached to an integral membrane V0 proton pore complex (components: a, c, c', c'' and d).

In terms of biological role, subunit of the peripheral V1 complex of vacuolar ATPase. Subunit C is necessary for the assembly of the catalytic sector of the enzyme and is likely to have a specific function in its catalytic activity. V-ATPase is responsible for acidifying a variety of intracellular compartments in eukaryotic cells. This chain is V-type proton ATPase subunit C (vatC), found in Dictyostelium discoideum (Social amoeba).